The following is a 99-amino-acid chain: Large ribosomal subunit protein uL23 (99 aa).

Belongs to the universal ribosomal protein uL23 family. In terms of assembly, part of the 50S ribosomal subunit. Contacts protein L29, and trigger factor when it is bound to the ribosome.

In terms of biological role, one of the early assembly proteins it binds 23S rRNA. One of the proteins that surrounds the polypeptide exit tunnel on the outside of the ribosome. Forms the main docking site for trigger factor binding to the ribosome. The protein is Large ribosomal subunit protein uL23 of Stutzerimonas stutzeri (strain A1501) (Pseudomonas stutzeri).